We begin with the raw amino-acid sequence, 199 residues long: Dephospho-CoA kinase (199 aa).

The DPCK domain maps to 3-199; the sequence is KVGLTGGICS…DLLEFFTLYQ (197 aa). Residue 11 to 16 coordinates ATP; that stretch reads CSGKST.

It belongs to the CoaE family.

The protein resides in the cytoplasm. The catalysed reaction is 3'-dephospho-CoA + ATP = ADP + CoA + H(+). It functions in the pathway cofactor biosynthesis; coenzyme A biosynthesis; CoA from (R)-pantothenate: step 5/5. Its function is as follows. Catalyzes the phosphorylation of the 3'-hydroxyl group of dephosphocoenzyme A to form coenzyme A. The sequence is that of Dephospho-CoA kinase from Clostridium perfringens (strain 13 / Type A).